A 122-amino-acid polypeptide reads, in one-letter code: U1 small nuclear ribonucleoprotein C (122 aa).

A Matrin-type zinc finger spans residues 4 to 36; it reads YFCDYCDTYLTHDSPSVRKTHCSGRKHKDNVKM.

This sequence belongs to the U1 small nuclear ribonucleoprotein C family. U1 snRNP is composed of the 7 core Sm proteins B/B', D1, D2, D3, E, F and G that assemble in a heptameric protein ring on the Sm site of the small nuclear RNA to form the core snRNP, and at least 3 U1 snRNP-specific proteins U1-70K, U1-A and U1-C. U1-C interacts with U1 snRNA and the 5' splice-site region of the pre-mRNA.

It is found in the nucleus. Component of the spliceosomal U1 snRNP, which is essential for recognition of the pre-mRNA 5' splice-site and the subsequent assembly of the spliceosome. U1-C is directly involved in initial 5' splice-site recognition for both constitutive and regulated alternative splicing. The interaction with the 5' splice-site seems to precede base-pairing between the pre-mRNA and the U1 snRNA. Stimulates commitment or early (E) complex formation by stabilizing the base pairing of the 5' end of the U1 snRNA and the 5' splice-site region. This Ciona intestinalis (Transparent sea squirt) protein is U1 small nuclear ribonucleoprotein C.